Consider the following 515-residue polypeptide: MVQPYKHEPFTDFTVEANKKAFEEGLKTVQAYLGQDYPLVIGGERVMTEDKIVSINPANKTEVVGRVAKANKDLAEKAMQTADAAFKWWSKTKPEMRADILFRAAAIVRRRKHEFSALLVKEAGKPWKEADADTAEAIDFMEYYARQMLKLKDGIPVESRPGETNRFFYIPLGVGVVISPWNFPFAIMAGTTVAALVTGNTVLLKPASATPVVAYKFVEVLEEAGLPAGVLNYIPGSGAEVGDYLVDHPRTRFISFTGSRDVGIRIYERAAKVHPGQIWLKRVIAEMGGKDTIVVDKEADLELAAQSIVASAFGFSGQKCSACSRVVALEDVYDQVLNRVVELTKQLKVGNPEEQSTFMGPVIDQSAYNKIMEYIEIGKQEGKLMTGGEGDDSKGFFIQPTVFADLDPKARIMQEEIFGPVVAFTKAKDFDHALEIANNTEYGLTGAVISNNRFNLEKAREEFHVGNLYFNRGCTGAIVGYHPFGGFNMSGTDSKAGGPDYLLLHMQAKTVSEMF.

Catalysis depends on residues glutamate 286 and cysteine 320.

This sequence belongs to the aldehyde dehydrogenase family. RocA subfamily.

The enzyme catalyses L-glutamate 5-semialdehyde + NAD(+) + H2O = L-glutamate + NADH + 2 H(+). It participates in amino-acid degradation; L-proline degradation into L-glutamate; L-glutamate from L-proline: step 2/2. The chain is 1-pyrroline-5-carboxylate dehydrogenase from Anoxybacillus flavithermus (strain DSM 21510 / WK1).